The chain runs to 217 residues: Small ribosomal subunit protein uS3 (217 aa).

Positions 38-106 (IRKYIEQRLA…RVHINIIEIK (69 aa)) constitute a KH type-2 domain.

Belongs to the universal ribosomal protein uS3 family. In terms of assembly, part of the 30S ribosomal subunit. Forms a tight complex with proteins S10 and S14.

In terms of biological role, binds the lower part of the 30S subunit head. Binds mRNA in the 70S ribosome, positioning it for translation. In Lactiplantibacillus plantarum (strain ATCC BAA-793 / NCIMB 8826 / WCFS1) (Lactobacillus plantarum), this protein is Small ribosomal subunit protein uS3.